Here is a 457-residue protein sequence, read N- to C-terminus: MADPAIKLFGKTIPLPELGVVDSSSSYTGFLTETQIPVRLSDSCTGDDDDEEMGDSGLGREEGDDVGDGGGESETDKKEEKDSECQEESLRNESNDVTTTTSGITEKTETTKAAKTNEESGGTACSQEGKLKKPDKILPCPRCNSMETKFCYYNNYNVNQPRHFCKKCQRYWTAGGTMRNVPVGAGRRKNKSPASHYNRHVSITSAEAMQKVARTDLQHPNGANLLTFGSDSVLCESMASGLNLVEKSLLKTQTVLQEPNEGLKITVPLNQTNEEAGTVSPLPKVPCFPGPPPTWPYAWNGVSWTILPFYPPPAYWSCPGVSPGAWNSFTWMPQPNSPSGSNPNSPTLGKHSRDENAAEPGTAFDETESLGREKSKPERCLWVPKTLRIDDPEEAAKSSIWETLGIKKDENADTFGAFRSSTKEKSSLSEGRLPGRRPELQANPAALSRSANFHESS.

Positions Met1–Lys130 are disordered. The span at Asp22 to Gln35 shows a compositional bias: polar residues. Acidic residues-rich tracts occupy residues Thr45–Gly54 and Glu62–Ser73. Composition is skewed to basic and acidic residues over residues Glu74–Ser94 and Glu106–Glu118. The segment at Leu138 to Ser192 adopts a Dof-type zinc-finger fold. Cys140, Cys143, Cys165, and Cys168 together coordinate Zn(2+). Disordered stretches follow at residues Gln334–Pro377 and Ala417–Ser457. Residues Ser337 to Pro346 are compositionally biased toward low complexity.

Interacts with ADO2 (via kelch repeats) and ADO3 (via kelch repeats). Expressed in the vasculature of cotyledons and hypocotyls, leaves and roots.

It localises to the nucleus. Transcription factor that binds specifically to a 5'-AA[AG]G-3' consensus core sequence. Regulates a photoperiodic flowering response. Transcriptional repressor of 'CONSTANS' expression. The stability of CDF2 is controlled by 'GIGANTEA' and redundantly by ADO3, ADO2 and/or ADO1. The protein is Cyclic dof factor 2 (CDF2) of Arabidopsis thaliana (Mouse-ear cress).